The sequence spans 338 residues: Fructose-1,6-bisphosphatase class 1 (338 aa).

4 residues coordinate Mg(2+): Glu92, Asp115, Leu117, and Asp118. Substrate contacts are provided by residues 118–121 (DGSS), Asn211, Tyr244, 262–264 (YLY), and Lys274. Residue Glu280 participates in Mg(2+) binding.

Belongs to the FBPase class 1 family. As to quaternary structure, homotetramer. Mg(2+) is required as a cofactor.

It localises to the cytoplasm. It catalyses the reaction beta-D-fructose 1,6-bisphosphate + H2O = beta-D-fructose 6-phosphate + phosphate. It participates in carbohydrate biosynthesis; gluconeogenesis. This Vibrio parahaemolyticus serotype O3:K6 (strain RIMD 2210633) protein is Fructose-1,6-bisphosphatase class 1.